Consider the following 245-residue polypeptide: Thiopurine S-methyltransferase (245 aa).

Position 14 is a phosphoserine (Ser14). An S-adenosyl-L-methionine-binding site is contributed by 29–40; it reads WQDKWVNGKTAF. A substrate-binding site is contributed by Phe40. Residue Lys58 is modified to N6-acetyllysine. Residues Leu69, Glu90, 134 to 135, and Arg152 contribute to the S-adenosyl-L-methionine site; that span reads SI.

Belongs to the class I-like SAM-binding methyltransferase superfamily. TPMT family. As to quaternary structure, monomer.

The protein localises to the cytoplasm. It catalyses the reaction S-adenosyl-L-methionine + a thiopurine = S-adenosyl-L-homocysteine + a thiopurine S-methylether.. The polypeptide is Thiopurine S-methyltransferase (TPMT) (Chlorocebus aethiops (Green monkey)).